The chain runs to 144 residues: Large ribosomal subunit protein uL15 (144 aa).

Positions 1-53 (MRLNTLSPAQGAKQAPKRVGRGIGSGLGKTGGRGHKGQNSRTGGGVRRGFEGG) are disordered. Gly residues predominate over residues 21–31 (RGIGSGLGKTG).

This sequence belongs to the universal ribosomal protein uL15 family. Part of the 50S ribosomal subunit.

In terms of biological role, binds to the 23S rRNA. The polypeptide is Large ribosomal subunit protein uL15 (Hamiltonella defensa subsp. Acyrthosiphon pisum (strain 5AT)).